Here is a 787-residue protein sequence, read N- to C-terminus: Ribonucleoside-diphosphate reductase large subunit (787 aa).

Substrate contacts are provided by residues threonine 209, serine 224–cysteine 225, glycine 255, asparagine 436–glutamate 440, and proline 618–serine 622. A disulfide bridge connects residues cysteine 225 and cysteine 453. Asparagine 436 acts as the Proton acceptor in catalysis. Cysteine 438 functions as the Cysteine radical intermediate in the catalytic mechanism. Glutamate 440 serves as the catalytic Proton acceptor.

The protein belongs to the ribonucleoside diphosphate reductase large chain family. Heterotetramer composed of a homodimer of the large subunit (R1) and a homodimer of the small subunit (R2). Larger multisubunit protein complex are also active, composed of (R1)n(R2)n.

It carries out the reaction a 2'-deoxyribonucleoside 5'-diphosphate + [thioredoxin]-disulfide + H2O = a ribonucleoside 5'-diphosphate + [thioredoxin]-dithiol. Its function is as follows. Ribonucleoside-diphosphate reductase holoenzyme provides the precursors necessary for viral DNA synthesis. Allows virus growth in non-dividing cells, as well as reactivation from latency in infected hosts. Catalyzes the biosynthesis of deoxyribonucleotides from the corresponding ribonucleotides. The sequence is that of Ribonucleoside-diphosphate reductase large subunit from Bos taurus (Bovine).